An 89-amino-acid polypeptide reads, in one-letter code: MAKKSMVAREAKRQKIVDRYAEKRAALKAAGDYEGLSKLPRNASPTRLHNRCRVTGRPHSVYRKFGLSRIAFRELAHKGQIPGVTKASW.

This sequence belongs to the universal ribosomal protein uS14 family. Part of the 30S ribosomal subunit. Contacts proteins S3 and S10.

Functionally, binds 16S rRNA, required for the assembly of 30S particles and may also be responsible for determining the conformation of the 16S rRNA at the A site. In Streptococcus pneumoniae serotype 2 (strain D39 / NCTC 7466), this protein is Small ribosomal subunit protein uS14.